We begin with the raw amino-acid sequence, 472 residues long: Adenosylhomocysteinase (472 aa).

Residues T62, D137, and E197 each contribute to the substrate site. Residue 198-200 participates in NAD(+) binding; sequence TTT. Residues K227 and D231 each coordinate substrate. Residues N232, 261–266, E284, N319, 340–342, and N385 contribute to the NAD(+) site; these read GYGDVG and IGH.

Belongs to the adenosylhomocysteinase family. It depends on NAD(+) as a cofactor.

It localises to the cytoplasm. It carries out the reaction S-adenosyl-L-homocysteine + H2O = L-homocysteine + adenosine. It participates in amino-acid biosynthesis; L-homocysteine biosynthesis; L-homocysteine from S-adenosyl-L-homocysteine: step 1/1. In terms of biological role, may play a key role in the regulation of the intracellular concentration of adenosylhomocysteine. The sequence is that of Adenosylhomocysteinase from Bordetella bronchiseptica (strain ATCC BAA-588 / NCTC 13252 / RB50) (Alcaligenes bronchisepticus).